Here is a 758-residue protein sequence, read N- to C-terminus: Maturase-like protein 2 (758 aa).

The protein localises to the plastid. It localises to the chloroplast. The protein is Maturase-like protein 2 (mat2) of Euglena gracilis.